Consider the following 815-residue polypeptide: Phenylalanine--tRNA ligase beta subunit (815 aa).

A tRNA-binding domain is found at 40–155 (APPFDKIVVA…EDAPVGQNIR (116 aa)). Residues 406–485 (PQRRPVSLRL…RIYGFERIAA (80 aa)) form the B5 domain. Asp-463, Asp-469, Glu-472, and Glu-473 together coordinate Mg(2+). The FDX-ACB domain occupies 712 to 814 (SKFPAAVRDL…LGEAFQARLR (103 aa)).

The protein belongs to the phenylalanyl-tRNA synthetase beta subunit family. Type 1 subfamily. As to quaternary structure, tetramer of two alpha and two beta subunits. Mg(2+) serves as cofactor.

The protein localises to the cytoplasm. The enzyme catalyses tRNA(Phe) + L-phenylalanine + ATP = L-phenylalanyl-tRNA(Phe) + AMP + diphosphate + H(+). This chain is Phenylalanine--tRNA ligase beta subunit, found in Cupriavidus pinatubonensis (strain JMP 134 / LMG 1197) (Cupriavidus necator (strain JMP 134)).